Reading from the N-terminus, the 644-residue chain is DNA mismatch repair protein MutL (644 aa).

Positions 363 to 405 (GTFNPFTDDKTNQHYTKAGSGSGSGYSSGSSSSSGSGSGSSYS) are disordered. A compositionally biased stretch (low complexity) spans 389-405 (SSGSSSSSGSGSGSSYS).

The protein belongs to the DNA mismatch repair MutL/HexB family.

This protein is involved in the repair of mismatches in DNA. It is required for dam-dependent methyl-directed DNA mismatch repair. May act as a 'molecular matchmaker', a protein that promotes the formation of a stable complex between two or more DNA-binding proteins in an ATP-dependent manner without itself being part of a final effector complex. This is DNA mismatch repair protein MutL from Flavobacterium johnsoniae (strain ATCC 17061 / DSM 2064 / JCM 8514 / BCRC 14874 / CCUG 350202 / NBRC 14942 / NCIMB 11054 / UW101) (Cytophaga johnsonae).